A 149-amino-acid chain; its full sequence is Calmodulin (149 aa).

At alanine 2 the chain carries N-acetylalanine. 4 consecutive EF-hand domains span residues 8–43, 44–79, 81–116, and 117–149; these read EQIA…LGQN, PTEA…KMKD, DTEE…LGEK, and LTDE…MMAK. The Ca(2+) site is built by aspartate 21, aspartate 23, aspartate 25, threonine 27, glutamate 32, aspartate 57, aspartate 59, asparagine 61, threonine 63, glutamate 68, aspartate 94, aspartate 96, asparagine 98, and glutamate 105. An N6,N6,N6-trimethyllysine modification is found at lysine 116. Aspartate 130, aspartate 132, aspartate 134, histidine 136, and glutamate 141 together coordinate Ca(2+).

It belongs to the calmodulin family.

Calmodulin mediates the control of a large number of enzymes, ion channels and other proteins by Ca(2+). Among the enzymes to be stimulated by the calmodulin-Ca(2+) complex are a number of protein kinases and phosphatases. The protein is Calmodulin of Stylonychia lemnae (Ciliate).